Here is a 467-residue protein sequence, read N- to C-terminus: D-hydantoinase (467 aa).

Zn(2+) is bound by residues His65, His67, and Lys156. N6-carboxylysine is present on Lys156. Position 161 (Tyr161) interacts with substrate. Positions 189 and 245 each coordinate Zn(2+). A substrate-binding site is contributed by Ser294. Asp321 serves as a coordination point for Zn(2+). Asn343 serves as a coordination point for substrate.

This sequence belongs to the metallo-dependent hydrolases superfamily. Hydantoinase/dihydropyrimidinase family. Homotetramer. The cofactor is Zn(2+). Post-translationally, carboxylation allows a single lysine to coordinate two zinc ions.

Functionally, catalyzes the stereospecific hydrolysis of the cyclic amide bond of D-hydantoin derivatives. The polypeptide is D-hydantoinase (hyuA) (Streptomyces coelicolor (strain ATCC BAA-471 / A3(2) / M145)).